A 412-amino-acid polypeptide reads, in one-letter code: Cytochrome P450-SOY (412 aa).

A compositionally biased stretch (polar residues) spans Met-1–Pro-25. The tract at residues Met-1–Tyr-38 is disordered. Cys-361 lines the heme pocket.

It belongs to the cytochrome P450 family. The cofactor is heme.

The protein resides in the cytoplasm. The sequence is that of Cytochrome P450-SOY (cyp105D1) from Streptomyces griseus.